The chain runs to 639 residues: C-type lectin domain-containing protein 160 (639 aa).

The N-terminal stretch at 1–19 is a signal peptide; that stretch reads MDLKSWILLSCTLLPLSVT. VWFA domains follow at residues 31-178 and 289-474; these read DIII…VGIG and DIIF…LCQV. One can recognise a C-type lectin domain in the interval 491–618; the sequence is KYGECFFPTK…WNSVSCTSEY (128 aa). Residues Cys594 and Cys614 are joined by a disulfide bond.

It localises to the secreted. This is C-type lectin domain-containing protein 160 (clec-160) from Caenorhabditis elegans.